The sequence spans 243 residues: Cysteine-rich secretory protein 2 (243 aa).

The N-terminal stretch at 1-21 (MALLPVLFLVTVLLPSLPAEG) is a signal peptide. The SCP domain occupies 41–169 (VNKHNELRKA…SLKYYYVCQY (129 aa)). Cystine bridges form between Cys-189/Cys-196, Cys-192/Cys-201, Cys-205/Cys-238, Cys-214/Cys-232, and Cys-223/Cys-236. Residues 205–238 (CQYQDLLSNCDSLKNTAGCEHELLKEKCKATCLC) enclose the ShKT domain.

Belongs to the CRISP family. In terms of assembly, interacts with NSUN4 isoform 3. As to expression, testis and epididymis.

Its subcellular location is the secreted. Functionally, may regulate some ion channels' activity and thereby regulate calcium fluxes during sperm capacitation. In Homo sapiens (Human), this protein is Cysteine-rich secretory protein 2 (CRISP2).